The chain runs to 104 residues: Circadian clock oscillator protein KaiB (104 aa).

It belongs to the KaiB family. As to quaternary structure, the KaiABC complex composition changes during the circadian cycle to control KaiC phosphorylation. Complexes KaiC(6), KaiA(2-4):KaiC(6), KaiB(6):KaiC(6) and KaiC(6):KaiB(6):KaiA(12) are among the most important forms, many form cooperatively. Undergoes a major conformational rearrangment; in the free state forms homotetramers as a dimer of dimers. When bound to the CI domain of KaiC switches to a monomeric thioredoxin-fold (KaiB(fs)). KaiB(fs) binds CikA, leading it to dephosphorylate phospho-RpaA.

Key component of the KaiABC oscillator complex, which constitutes the main circadian regulator in cyanobacteria. Complex composition changes during the circadian cycle to control KaiC phosphorylation. KaiA stimulates KaiC autophosphorylation, while KaiB sequesters KaiA, leading to KaiC autodephosphorylation. Phospho-Ser-431 KaiC accumulation triggers binding of KaiB to form the KaiB(6):KaiC(6) complex, leading to changes in output regulators CikA and SasA. KaiB switches to a thioredoxin-like fold (KaiB(fs)) when bound to KaiC. KaiB(6):KaiC(6) formation exposes a site for KaiA binding that sequesters KaiA from KaiC, making the KaiC(6):KaiB(6):KaiA(12) complex that results in KaiC autodephosphorylation. Its function is as follows. A metamorphic protein which reversibly switches between an inactive tetrameric fold and a rare, thioredoxin-like monomeric fold (KaiB(fs)). KaiB(fs) binds phospho-KaiC, KaiA and CikA. KaiA and CikA compete for binding to KaiB(fs), and KaiB(fs) and SasA compete for binding to KaiC, thus the clock oscillator and output signal pathway are tightly coupled. This is Circadian clock oscillator protein KaiB from Parasynechococcus marenigrum (strain WH8102).